The primary structure comprises 256 residues: Low molecular mass lipoprotein 3 (256 aa).

Residues 1–17 form the signal peptide; it reads MKPAIVILCLFVASLYA.

This sequence belongs to the 30 kDa lipoprotein family. As to expression, detected in larval hemolymph (at protein level).

It localises to the secreted. The protein is Low molecular mass lipoprotein 3 of Bombyx mori (Silk moth).